Reading from the N-terminus, the 239-residue chain is Tumor protein p53-inducible nuclear protein 1 (239 aa).

The LIR signature appears at E25–I37.

As to quaternary structure, interacts with p53/TP53 and HIPK2. Interacts with PRKCG, GABARAP, GABARAPL1, GABARAPL2, MAP1LC3A, MAP1LC3B and MAP1LC3C. In terms of tissue distribution, specifically expressed by acinar cells of chronic pancreatitis tissue.

It is found in the cytoplasm. The protein localises to the cytosol. Its subcellular location is the nucleus. It localises to the PML body. The protein resides in the cytoplasmic vesicle. It is found in the autophagosome. Functionally, antiproliferative and proapoptotic protein involved in cell stress response which acts as a dual regulator of transcription and autophagy. Acts as a positive regulator of autophagy. In response to cellular stress or activation of autophagy, relocates to autophagosomes where it interacts with autophagosome-associated proteins GABARAP, GABARAPL1/L2, MAP1LC3A/B/C and regulates autophagy. Acts as an antioxidant and plays a major role in p53/TP53-driven oxidative stress response. Possesses both a p53/TP53-independent intracellular reactive oxygen species (ROS) regulatory function and a p53/TP53-dependent transcription regulatory function. Positively regulates p53/TP53 and p73/TP73 and stimulates their capacity to induce apoptosis and regulate cell cycle. In response to double-strand DNA breaks, promotes p53/TP53 phosphorylation on 'Ser-46' and subsequent apoptosis. Acts as a tumor suppressor by inducing cell death by an autophagy and caspase-dependent mechanism. Can reduce cell migration by regulating the expression of SPARC. This Rattus norvegicus (Rat) protein is Tumor protein p53-inducible nuclear protein 1 (Trp53inp1).